A 131-amino-acid polypeptide reads, in one-letter code: Snaclec alboaggregin-A subunit alpha (131 aa).

In terms of domain architecture, C-type lectin spans 1–131; the sequence is DCPSDWSSYD…EYPFVCKFXR (131 aa). Cystine bridges form between Cys-2–Cys-13, Cys-30–Cys-127, and Cys-102–Cys-119.

This sequence belongs to the snaclec family. As to quaternary structure, heterotetramer of the subunits alpha, alpha', beta and beta'; disulfide-linked. As to expression, expressed by the venom gland.

The protein localises to the secreted. Functionally, potent platelet activator that aggregates platelets via both GPIbalpha (GP1BA) and GPVI (GP6). Induces a tyrosine phosphorylation profile in platelets that resembles this produced by collagen, involving the time dependent tyrosine phosphorylation of Fc receptor gamma chain (FCGR1A), phospholipase Cgamma2 (PLCG2), and LAT. This is Snaclec alboaggregin-A subunit alpha from Trimeresurus albolabris (White-lipped pit viper).